The following is a 414-amino-acid chain: Eukaryotic initiation factor 4A-3 (414 aa).

A2 carries the post-translational modification N-acetylalanine. The short motif at 41–69 (DSFDAMELQPDLLRGIYAYGFEKPSAIQQ) is the Q motif element. Positions 72–242 (IIPFCKGLDV…RKFMNKPVRI (171 aa)) constitute a Helicase ATP-binding domain. ATP is bound at residue 85–92 (AQSGTGKT). Position 106 is a phosphoserine (S106). Position 147 is a phosphothreonine (T147). Residues 190-193 (DEAD) carry the DEAD box motif. Positions 253–414 (GIKQFYVNVD…ELPSNVADLL (162 aa)) constitute a Helicase C-terminal domain.

This sequence belongs to the DEAD box helicase family. eIF4A subfamily. As to quaternary structure, eIF4F is a multi-subunit complex, the composition of which varies with external and internal environmental conditions. It is composed of at least EIF4A, EIF4E and EIF4G.

The protein resides in the cytoplasm. It catalyses the reaction ATP + H2O = ADP + phosphate + H(+). Its function is as follows. ATP-dependent RNA helicase which is a subunit of the eIF4F complex involved in cap recognition and is required for mRNA binding to ribosome. In the current model of translation initiation, eIF4A unwinds RNA secondary structures in the 5'-UTR of mRNAs which is necessary to allow efficient binding of the small ribosomal subunit, and subsequent scanning for the initiator codon. This is Eukaryotic initiation factor 4A-3 (TIF4A-3) from Arabidopsis thaliana (Mouse-ear cress).